The chain runs to 183 residues: uncharacterized protein (183 aa).

Positions 1–182 constitute a Macro domain; that stretch reads MIKVVKGDIT…KALKIVGQGG (182 aa).

This is an uncharacterized protein from Pyrococcus furiosus (strain ATCC 43587 / DSM 3638 / JCM 8422 / Vc1).